A 385-amino-acid chain; its full sequence is Non-structural maintenance of chromosomes element 4 homolog A (385 aa).

Residues 1-69 form a disordered region; that stretch reads MSGDSSGRGP…PSDSGDEMMD (69 aa). Composition is skewed to basic and acidic residues over residues 10 to 21 and 42 to 55; these read PEGRGRGRDPHR and SARE…RPSL. Over residues 56 to 68 the composition is skewed to acidic residues; sequence EDTEPSDSGDEMM. Position 345 is a phosphothreonine (threonine 345). Residue serine 377 is modified to Phosphoserine.

It belongs to the NSE4 family. In terms of assembly, component of the SMC5-SMC6 complex which consists at least of SMC5, SMC6, NSMCE2, NSMCE1, NSMCE4A or EID3 and NSMCE3. NSMCE1, NSMCE4A or EID3 and NSMCE3 probably form a subcomplex that bridges the head domains of the SMC5:SMC6 heterodimer. Interacts with NSMCE3.

Its subcellular location is the nucleus. The protein resides in the chromosome. It is found in the telomere. Component of the SMC5-SMC6 complex, a complex involved in DNA double-strand breaks by homologous recombination. The complex may promote sister chromatid homologous recombination by recruiting the SMC1-SMC3 cohesin complex to double-strand breaks. The complex is required for telomere maintenance via recombination in ALT (alternative lengthening of telomeres) cell lines and mediates sumoylation of shelterin complex (telosome) components which is proposed to lead to shelterin complex disassembly in ALT-associated PML bodies (APBs). Is involved in positive regulation of response to DNA damage stimulus. The polypeptide is Non-structural maintenance of chromosomes element 4 homolog A (NSMCE4A) (Homo sapiens (Human)).